A 564-amino-acid polypeptide reads, in one-letter code: Agglutinin (564 aa).

A signal peptide spans 1–24 (MYAVATWLCFGSTSGWSFTLEDNN). 32–34 (IIN) contacts beta-D-galactose. Asn-34 is a glycosylation site (N-linked (GlcNAc...) asparagine). Catalysis depends on residues Tyr-104, Tyr-147, Glu-200, and Arg-203. AMP-binding positions include 104-105 (YV) and 145-147 (GNY). A glycan (N-linked (GlcNAc...) asparagine) is linked at Asn-259. The cysteines at positions 282 and 306 are disulfide-linked. Residues 291–302 (SLLIRPVVPNFN) constitute a propeptide, linker peptide. One can recognise a Ricin B-type lectin 1 domain in the interval 309-436 (PEPIVRIVGR…YAVSQGWLPT (128 aa)). Beta-D-galactose contacts are provided by residues Ile-312, 324 to 328 (DVTGE), Gln-337, Lys-342, and Asn-348. The 1-alpha repeat unit spans residues 319–361 (NGLCVDVTGEEFFDGNPIQLWPCKSNTDWNQLWTLRKDSTIRS). A disulfide bond links Cys-322 and Cys-341. One copy of the 1-beta repeat lies at 362–402 (NGKCLTISKSSPRQQVVIYNCSTATVGATRWQIWDNRTIIN). Cys-365 and Cys-382 are joined by a disulfide. N-linked (GlcNAc...) asparagine glycosylation is found at Asn-397 and Asn-437. The 1-gamma repeat unit spans residues 405 to 437 (SGLVLAATSGNSGTKLTVQTNIYAVSQGWLPTN). Asn-437 contributes to the beta-D-galactose binding site. The Ricin B-type lectin 2 domain occupies 439–563 (TQPFVTTIVG…GNLNQIWLPL (125 aa)). The stretch at 450–485 (YGMCLQANSGKVWLEDCTSEKAEQQWALYADGSIRP) is one 2-alpha repeat. 2 cysteine pairs are disulfide-bonded: Cys-453–Cys-466 and Cys-492–Cys-509. A 2-beta repeat occupies 489 to 528 (RDNCLTTDANIKGTVVKILSCGPASSGQRWMFKNDGTILN). A 2-gamma repeat occupies 531–558 (NGLVLDVRRSDPSLKQIIVHPFHGNLNQ).

The protein in the N-terminal section; belongs to the ribosome-inactivating protein family. Type 2 RIP subfamily.

It carries out the reaction Endohydrolysis of the N-glycosidic bond at one specific adenosine on the 28S rRNA.. This chain is Agglutinin, found in Ricinus communis (Castor bean).